A 338-amino-acid chain; its full sequence is Histone acetyltransferase SAS2 (338 aa).

Polar residues predominate over residues 1–15 (MARSLSQSLTATTQK). The interval 1-31 (MARSLSQSLTATTQKLKGKKNGGKGKNKPSA) is disordered. Basic residues predominate over residues 16–31 (LKGKKNGGKGKNKPSA). The MYST-type HAT domain maps to 45-338 (LNERNIRQIQ…LKDEYLLIDD (294 aa)). The C2HC MYST-type zinc finger occupies 100–126 (LFVCEYCFKYTDDQTRFVGHVASCPFQ). Lysine 168 bears the N6-acetyllysine; by autocatalysis mark. Acetyl-CoA is bound by residues 209-211 (ILI) and 216-222 (QRRGLGL). Residue glutamate 242 is the Proton donor/acceptor of the active site. The acetyl-CoA site is built by serine 246 and lysine 323.

This sequence belongs to the MYST (SAS/MOZ) family. Interacts with CAC1. Component of the SAS complex, at least composed of SAS2, SAS4 and SAS5. These three proteins constitute the core of the complex and are sufficient to acetylate histones. SAS4 is essential for HAT activity of the complex, while SAS5 is required for maxiaml HAT activity. Autoacetylation at Lys-168 is required for proper function.

Its subcellular location is the cytoplasm. It localises to the nucleus. It catalyses the reaction L-lysyl-[protein] + acetyl-CoA = N(6)-acetyl-L-lysyl-[protein] + CoA + H(+). Its function is as follows. Histone acetyltransferase (HAT) subunit of the SAS complex, a multiprotein complex that acetylates 'Lys-16' of histone H4 and 'Lys-14' of histone H3. The SAS complex is however unable to acetylate nucleosomal histones. The complex is involved in transcriptional silencing at telomeres and at HML locus. Also involved in rDNA silencing and G0 control. This chain is Histone acetyltransferase SAS2 (SAS2), found in Saccharomyces cerevisiae (strain ATCC 204508 / S288c) (Baker's yeast).